A 485-amino-acid polypeptide reads, in one-letter code: MSPQTETKASVGFKAGVKDYKLTYYTPEYETKDTDILAAFRVTPQPGVPPEEAGAAVAAESSTGTWTTVWTDGLTSLDRYKGRCYGIEPVPGEDNQYIAYVAYPLDLFEEGSVTNMFTSIVGNVFGFKALRALRLEDLRIPTAYVKTFAGPPHGIQVERDKLNKYGRPLLGCTIKPKLGLSAKNYGRACYECLRGGLDFTKDDENVNSQPFMRWRDRFLFCAEAIYKAQAETGEIKGHYLNATAGTCEEMLKRAVFARELGVPIIMHDYLTGGFTANTSLSHYCRDNGLLLHIHRAMHAVIDRQKNHGIHFRVLAKALRMSGGDHIHSGTVVGKLEGEREITLGFVDLLRDDFIEKDRSRGIYFTQDWVSLPGVLPVASGGIHVWHMPALTEIFGDDSVLQFGGGTLGHPWGNAPGAVANRVALEACVQARNEGRDLATEGNEIIREATKWSPELAAACEVWKEIKFEFQAMDTLDTDKDKDKKR.

Residues 1 to 2 (MS) constitute a propeptide that is removed on maturation. The residue at position 3 (proline 3) is an N-acetylproline. Lysine 14 is modified (N6,N6,N6-trimethyllysine). Asparagine 123 and threonine 173 together coordinate substrate. Lysine 175 serves as the catalytic Proton acceptor. Lysine 177 contacts substrate. Mg(2+)-binding residues include lysine 201, aspartate 203, and glutamate 204. Lysine 201 carries the N6-carboxylysine modification. The active-site Proton acceptor is histidine 294. Substrate-binding residues include arginine 295, histidine 327, and serine 379.

It belongs to the RuBisCO large chain family. Type I subfamily. In terms of assembly, heterohexadecamer of 8 large chains and 8 small chains; disulfide-linked. The disulfide link is formed within the large subunit homodimers. Mg(2+) is required as a cofactor. The disulfide bond which can form in the large chain dimeric partners within the hexadecamer appears to be associated with oxidative stress and protein turnover.

It is found in the plastid. The protein localises to the chloroplast. It carries out the reaction 2 (2R)-3-phosphoglycerate + 2 H(+) = D-ribulose 1,5-bisphosphate + CO2 + H2O. The catalysed reaction is D-ribulose 1,5-bisphosphate + O2 = 2-phosphoglycolate + (2R)-3-phosphoglycerate + 2 H(+). Functionally, ruBisCO catalyzes two reactions: the carboxylation of D-ribulose 1,5-bisphosphate, the primary event in carbon dioxide fixation, as well as the oxidative fragmentation of the pentose substrate in the photorespiration process. Both reactions occur simultaneously and in competition at the same active site. The chain is Ribulose bisphosphate carboxylase large chain from Flaveria bidentis (Coastal plain yellowtops).